Here is a 244-residue protein sequence, read N- to C-terminus: Adenosylcobinamide-GDP ribazoletransferase (244 aa).

A run of 5 helical transmembrane segments spans residues 31–51 (LLCYPLVGLLFGLLLWLASHL), 55–75 (APAPLHAALLLTLWVLLSGAL), 109–129 (IAVVTLVLVLLLKFCALWVLV), 133–153 (AGALLVLAPVVGRAAMLGLFL), and 188–208 (LLLGGWSAIWPMALALGVFLW).

It belongs to the CobS family. The cofactor is Mg(2+).

It is found in the cell inner membrane. The catalysed reaction is alpha-ribazole + adenosylcob(III)inamide-GDP = adenosylcob(III)alamin + GMP + H(+). The enzyme catalyses alpha-ribazole 5'-phosphate + adenosylcob(III)inamide-GDP = adenosylcob(III)alamin 5'-phosphate + GMP + H(+). It functions in the pathway cofactor biosynthesis; adenosylcobalamin biosynthesis; adenosylcobalamin from cob(II)yrinate a,c-diamide: step 7/7. In terms of biological role, joins adenosylcobinamide-GDP and alpha-ribazole to generate adenosylcobalamin (Ado-cobalamin). Also synthesizes adenosylcobalamin 5'-phosphate from adenosylcobinamide-GDP and alpha-ribazole 5'-phosphate. The sequence is that of Adenosylcobinamide-GDP ribazoletransferase from Pseudomonas putida (strain W619).